Reading from the N-terminus, the 525-residue chain is Erythropoietin receptor (525 aa).

A signal peptide spans 1–32; it reads MGAPSSLLFSTAHWRTVPFLLAFWVLLSTGTA. Over 33–249 the chain is Extracellular; it reads EDPTMTPEFL…TIATIIDLRL (217 aa). Cys-58 and Cys-68 are joined by a disulfide. Asn-77, Asn-100, Asn-149, and Asn-185 each carry an N-linked (GlcNAc...) asparagine glycan. A disulfide bridge links Cys-91 with Cys-107. In terms of domain architecture, Fibronectin type-III spans 146–246; the sequence is PPLNVTVKEK…APITIATIID (101 aa). A WSXWS motif motif is present at residues 232 to 236; sequence WSDWT. A helical membrane pass occupies residues 250-270; it reads LLLLSIAIFVALIAGVGVYIF. Topologically, residues 271 to 525 are cytoplasmic; sequence MRHGMYLKHK…NFLAPIYSQS (255 aa). Residues 281 to 289 carry the Box 1 motif motif; sequence VWPQVPTPE. Disordered stretches follow at residues 434–459 and 492–513; these read APRM…QSIP and LDMS…QNSP. Polar residues predominate over residues 447–459; sequence ENSVSSDGKQSIP. An ITIM motif motif is present at residues 487–492; it reads LKYAYL.

It belongs to the type I cytokine receptor family. Type 1 subfamily. In terms of tissue distribution, expressed in the ventral blood island from stage 28 through to stage 36. Expressed in the circulating blood by stage 40. In the adult, highly expressed in peripheral blood cells including immature erythrocytes and basophils, and moderately expressed in the hematopoietic organs: liver, kidney and spleen. Expressed at a low level in adult brain.

Its subcellular location is the cell membrane. In terms of biological role, receptor for erythropoietin. Mediates erythropoietin-induced erythroblast proliferation and differentiation. The chain is Erythropoietin receptor from Xenopus laevis (African clawed frog).